We begin with the raw amino-acid sequence, 187 residues long: Elongation factor P (187 aa).

Belongs to the elongation factor P family.

It is found in the cytoplasm. It functions in the pathway protein biosynthesis; polypeptide chain elongation. Functionally, involved in peptide bond synthesis. Stimulates efficient translation and peptide-bond synthesis on native or reconstituted 70S ribosomes in vitro. Probably functions indirectly by altering the affinity of the ribosome for aminoacyl-tRNA, thus increasing their reactivity as acceptors for peptidyl transferase. The sequence is that of Elongation factor P from Corynebacterium efficiens (strain DSM 44549 / YS-314 / AJ 12310 / JCM 11189 / NBRC 100395).